The sequence spans 929 residues: Synaptopodin (929 aa).

The residue at position 1 (methionine 1) is an N-acetylmethionine. Positions methionine 1 to alanine 12 are enriched in pro residues. Residues methionine 1 to lysine 260 are disordered. 2 stretches are compositionally biased toward basic and acidic residues: residues glycine 60–alanine 69 and serine 91–valine 110. Serine 140 carries the post-translational modification Phosphoserine. Residues threonine 142 to alanine 151 are compositionally biased toward basic and acidic residues. Polar residues predominate over residues arginine 152 to glycine 170. Position 207 is a phosphoserine (serine 207). Residues glutamate 224 to glutamine 234 are compositionally biased toward pro residues. Serine 263 is subject to Phosphoserine. Positions glycine 285–alanine 389 are disordered. The segment covering leucine 317–serine 332 has biased composition (low complexity). Asparagine 330 carries an N-linked (GlcNAc...) asparagine glycan. The span at histidine 333–serine 379 shows a compositional bias: polar residues. Residues serine 501 and serine 525 each carry the phosphoserine modification. Residues phenylalanine 509–asparagine 558 form a disordered region. A Phosphothreonine modification is found at threonine 560. Residues proline 562–tyrosine 565 carry the PPxY motif motif. Position 580 is a phosphoserine (serine 580). A PPxY motif motif is present at residues proline 581 to tyrosine 584. 2 disordered regions span residues proline 589–isoleucine 610 and lysine 630–glutamate 726. Over residues alanine 646 to glycine 656 the composition is skewed to basic and acidic residues. Phosphoserine occurs at positions 685, 702, and 738. Positions serine 685–serine 698 are enriched in low complexity. A disordered region spans residues isoleucine 740 to tryptophan 763. Threonine 746 is modified (phosphothreonine). Phosphoserine is present on residues serine 754, serine 758, and serine 779. A Phosphothreonine modification is found at threonine 783. Proline 784, threonine 804, arginine 812, lysine 826, serine 833, serine 854, proline 871, and proline 894 each carry phosphoserine. Residues lysine 826–serine 839 are compositionally biased toward low complexity. The interval lysine 826–glycine 916 is disordered. The segment covering glycine 866–alanine 880 has biased composition (polar residues).

The protein belongs to the synaptopodin family. In terms of assembly, interacts with BAIAP1. Interacts with actin. Interacts (via PPxY motifs) with WWC1 (via WW domains). In terms of processing, O-glycosylated. In terms of tissue distribution, expressed in cerebral cortex.

It localises to the cytoplasm. It is found in the cytoskeleton. The protein resides in the cell junction. Its subcellular location is the tight junction. The protein localises to the perikaryon. It localises to the cell projection. It is found in the dendritic spine. The protein resides in the postsynaptic density. Its subcellular location is the synapse. The protein localises to the cytosol. In terms of biological role, actin-associated protein that may play a role in modulating actin-based shape and motility of dendritic spines and renal podocyte foot processes. Seems to be essential for the formation of spine apparatuses in spines of telencephalic neurons, which is involved in synaptic plasticity. The sequence is that of Synaptopodin (SYNPO) from Homo sapiens (Human).